The following is an 894-amino-acid chain: Probable cytoplasmic aconitate hydratase (894 aa).

Residues glutamine 87 and 207 to 209 contribute to the substrate site; that span reads DSH. Positions 438, 504, and 507 each coordinate [4Fe-4S] cluster. Residues arginine 537, arginine 542, and 781-782 contribute to the substrate site; that span reads SR.

This sequence belongs to the aconitase/IPM isomerase family. [4Fe-4S] cluster is required as a cofactor.

It is found in the cytoplasm. The protein localises to the cytosol. The enzyme catalyses citrate = D-threo-isocitrate. In terms of biological role, catalyzes the isomerization of citrate to isocitrate via cis-aconitate. In Dictyostelium discoideum (Social amoeba), this protein is Probable cytoplasmic aconitate hydratase (aco1).